The primary structure comprises 198 residues: Elongation factor Ts (198 aa).

The involved in Mg(2+) ion dislocation from EF-Tu stretch occupies residues 81 to 84 (TDFV).

This sequence belongs to the EF-Ts family.

It is found in the cytoplasm. Associates with the EF-Tu.GDP complex and induces the exchange of GDP to GTP. It remains bound to the aminoacyl-tRNA.EF-Tu.GTP complex up to the GTP hydrolysis stage on the ribosome. This is Elongation factor Ts from Dictyoglomus thermophilum (strain ATCC 35947 / DSM 3960 / H-6-12).